Here is a 506-residue protein sequence, read N- to C-terminus: O-phosphoseryl-tRNA(Sec) selenium transferase (506 aa).

The interval 1 to 44 is tetramerization; it reads MEHESFKASERLVTPAYIRQGREARRMHEQLVRQLVEQGKCPKE. Pyridoxal 5'-phosphate is bound at residue Arg-75. The interval 96–106 is phosphate loop (P-loop); it reads GRSGDISAIQP. Arg-97, Ser-98, and Gln-105 together coordinate substrate. Residue Arg-271 coordinates tRNA. Position 284 is an N6-(pyridoxal phosphate)lysine (Lys-284). Arg-313 provides a ligand contact to substrate. Arg-398 and Lys-463 together coordinate tRNA.

It belongs to the SepSecS family. Homotetramer formed by a catalytic dimer and a non-catalytic dimer serving as a binding platform that orients tRNASec for catalysis. Each tetramer binds the CCA ends of two tRNAs which point to the active sites of the catalytic dimer. The cofactor is pyridoxal 5'-phosphate.

The protein resides in the cytoplasm. The enzyme catalyses O-phospho-L-seryl-tRNA(Sec) + selenophosphate + H2O = L-selenocysteinyl-tRNA(Sec) + 2 phosphate. It participates in aminoacyl-tRNA biosynthesis; selenocysteinyl-tRNA(Sec) biosynthesis; selenocysteinyl-tRNA(Sec) from L-seryl-tRNA(Sec) (archaeal/eukaryal route): step 2/2. In terms of biological role, converts O-phosphoseryl-tRNA(Sec) to selenocysteinyl-tRNA(Sec) required for selenoprotein biosynthesis. The polypeptide is O-phosphoseryl-tRNA(Sec) selenium transferase (sepsecs) (Xenopus tropicalis (Western clawed frog)).